The primary structure comprises 335 residues: Epidermal differentiation-specific protein (335 aa).

Beta/gamma crystallin 'Greek key' domains lie at 2–42, 43–81, 87–126, and 127–169; these read NTIT…KIVG, QPWI…RLIT, PQIT…RVQR, and GAWA…YPLR.

The protein belongs to the beta/gamma-crystallin family. As to expression, epidermis specific.

The sequence is that of Epidermal differentiation-specific protein from Cynops pyrrhogaster (Japanese fire-bellied newt).